Consider the following 85-residue polypeptide: Small ribosomal subunit protein uS17 (85 aa).

Belongs to the universal ribosomal protein uS17 family. In terms of assembly, part of the 30S ribosomal subunit.

In terms of biological role, one of the primary rRNA binding proteins, it binds specifically to the 5'-end of 16S ribosomal RNA. The polypeptide is Small ribosomal subunit protein uS17 (Mycoplasma pneumoniae (strain ATCC 29342 / M129 / Subtype 1) (Mycoplasmoides pneumoniae)).